The primary structure comprises 404 residues: Cysteine desulfurase IscS (404 aa).

Pyridoxal 5'-phosphate is bound by residues 75 to 76 (AT), Asn-155, Gln-183, and 203 to 205 (SAH). An N6-(pyridoxal phosphate)lysine modification is found at Lys-206. Thr-243 contributes to the pyridoxal 5'-phosphate binding site. The Cysteine persulfide intermediate role is filled by Cys-328. Cys-328 contacts [2Fe-2S] cluster.

Belongs to the class-V pyridoxal-phosphate-dependent aminotransferase family. NifS/IscS subfamily. As to quaternary structure, homodimer. Forms a heterotetramer with IscU, interacts with other sulfur acceptors. Pyridoxal 5'-phosphate is required as a cofactor.

Its subcellular location is the cytoplasm. It carries out the reaction (sulfur carrier)-H + L-cysteine = (sulfur carrier)-SH + L-alanine. It participates in cofactor biosynthesis; iron-sulfur cluster biosynthesis. Its function is as follows. Master enzyme that delivers sulfur to a number of partners involved in Fe-S cluster assembly, tRNA modification or cofactor biosynthesis. Catalyzes the removal of elemental sulfur atoms from cysteine to produce alanine. Functions as a sulfur delivery protein for Fe-S cluster synthesis onto IscU, an Fe-S scaffold assembly protein, as well as other S acceptor proteins. This is Cysteine desulfurase IscS from Ruthia magnifica subsp. Calyptogena magnifica.